The following is a 210-amino-acid chain: Thymidylate kinase (210 aa).

ATP is bound at residue 10-17 (GPEGAGKS).

Belongs to the thymidylate kinase family.

It catalyses the reaction dTMP + ATP = dTDP + ADP. Phosphorylation of dTMP to form dTDP in both de novo and salvage pathways of dTTP synthesis. In Pseudomonas entomophila (strain L48), this protein is Thymidylate kinase.